A 561-amino-acid chain; its full sequence is Carbohydrate sulfotransferase 15 (561 aa).

The Cytoplasmic segment spans residues 1 to 80; it reads MRHCINCCVQ…FLRFRKGKRC (80 aa). The chain crosses the membrane as a helical; Signal-anchor for type II membrane protein span at residues 81-101; it reads SLVFGLIIMTLVMASYILSGA. Over 102–561 the chain is Lumenal; sequence HQELLISSPF…DDEAFAWKTT (460 aa). 263 to 267 lines the 3'-phosphoadenylyl sulfate pocket; it reads KCGTT. N-linked (GlcNAc...) asparagine glycosylation occurs at Asn-364. 3'-phosphoadenylyl sulfate is bound by residues Arg-392 and Ser-400.

It belongs to the sulfotransferase 1 family. As to quaternary structure, homodimer; disulfide-linked (Potential). The relevance of homodimerization is however unsure. May interact with phosphorylated proteins in resting B-cells, including HCK. A divalent metal cation serves as cofactor. Glutathione is required as a cofactor. Post-translationally, glycosylated.

It localises to the golgi apparatus membrane. The enzyme catalyses dermatan 4'-sulfate + n 3'-phosphoadenylyl sulfate = dermatan 4',6'-bissulfate + n adenosine 3',5'-bisphosphate + n H(+). The catalysed reaction is chondroitin 4'-sulfate + n 3'-phosphoadenylyl sulfate = chondroitin 4',6'-bissulfate + n adenosine 3',5'-bisphosphate + n H(+). Its activity is regulated as follows. Inhibited by phenyl beta-GalNAc(4,6-SO(4)). In terms of biological role, sulfotransferase that transfers sulfate from 3'-phosphoadenosine 5'-phosphosulfate (PAPS) to the C-6 hydroxyl group of the GalNAc 4-sulfate residue of chondroitin sulfate A and forms chondroitin sulfate E containing GlcA-GalNAc(4,6-SO(4)) repeating units. It also transfers sulfate to a unique non-reducing terminal sequence, GalNAc(4SO4)-GlcA(2SO4)-GalNAc(6SO4), to yield a highly sulfated structure similar to the structure found in thrombomodulin chondroitin sulfate. May also act as a B-cell receptor involved in BCR ligation-mediated early activation that mediate regulatory signals key to B-cell development and/or regulation of B-cell-specific RAG expression; however such results are unclear in vivo. This chain is Carbohydrate sulfotransferase 15 (Chst15), found in Mus musculus (Mouse).